A 679-amino-acid polypeptide reads, in one-letter code: Biosynthetic arginine decarboxylase (679 aa).

The segment at 1 to 43 (MKHRGQEEMGVESTATSDEVVKVPANGNKLEGKNHKQKKLLPT) is disordered. Lys-149 is subject to N6-(pyridoxal phosphate)lysine. 331 to 341 (LDVGGGLGVDY) is a binding site for substrate.

This sequence belongs to the Orn/Lys/Arg decarboxylase class-II family. SpeA subfamily. Mg(2+) is required as a cofactor. Requires pyridoxal 5'-phosphate as cofactor.

It carries out the reaction L-arginine + H(+) = agmatine + CO2. In terms of biological role, catalyzes the biosynthesis of agmatine from arginine. The sequence is that of Biosynthetic arginine decarboxylase from Nostoc sp. (strain PCC 7120 / SAG 25.82 / UTEX 2576).